The following is a 302-amino-acid chain: Nucleotide-binding protein Rsph17029_0317 (302 aa).

Residue 15 to 22 (GPSGAGRT) participates in ATP binding. 62-65 (DVRN) is a GTP binding site.

Belongs to the RapZ-like family.

Displays ATPase and GTPase activities. This Cereibacter sphaeroides (strain ATCC 17029 / ATH 2.4.9) (Rhodobacter sphaeroides) protein is Nucleotide-binding protein Rsph17029_0317.